A 100-amino-acid polypeptide reads, in one-letter code: Large ribosomal subunit protein uL23 (100 aa).

Belongs to the universal ribosomal protein uL23 family. Part of the 50S ribosomal subunit. Contacts protein L29, and trigger factor when it is bound to the ribosome.

Functionally, one of the early assembly proteins it binds 23S rRNA. One of the proteins that surrounds the polypeptide exit tunnel on the outside of the ribosome. Forms the main docking site for trigger factor binding to the ribosome. The sequence is that of Large ribosomal subunit protein uL23 from Thermosynechococcus vestitus (strain NIES-2133 / IAM M-273 / BP-1).